The following is a 161-amino-acid chain: Allophycocyanin beta chain (161 aa).

Residue asparagine 71 is modified to N4-methylasparagine. (2R,3E)-phycocyanobilin is bound at residue cysteine 81.

Belongs to the phycobiliprotein family. In terms of assembly, heterodimer of an alpha and a beta chain. In terms of processing, contains one covalently linked phycocyanobilin chromophore.

The protein localises to the cellular thylakoid membrane. Light-harvesting photosynthetic bile pigment-protein from the phycobiliprotein complex. Allophycocyanin has a maximum absorption at approximately 650 nanometers. The chain is Allophycocyanin beta chain (apcB) from Anabaena cylindrica.